A 395-amino-acid polypeptide reads, in one-letter code: Immunoglobulin heavy constant gamma 2 (395 aa).

The interval 1–98 (ASTKGPSVFP…PSNTKVDKTV (98 aa)) is CH1. Residues 1–346 (ASTKGPSVFP…DGELDGLWTT (346 aa)) lie on the Extracellular side of the membrane. Ig-like domains follow at residues 6–99 (PSVF…KTVE), 117–216 (PSVF…KTIS), and 225–321 (PQVY…KSLS). A disulfide bridge connects residues C27 and C83. Residues 99-110 (ERKCCVECPPCP) form a hinge region. A CH2 region spans residues 111 to 219 (APPVAGPSVF…PIEKTISKTK (109 aa)). Disulfide bonds link C140–C200 and C246–C304. N176 is a glycosylation site (N-linked (GlcNAc...) (complex) asparagine). Positions 220-326 (GQPREPQVYT…QKSLSLSPEL (107 aa)) are CH3. The helical transmembrane segment at 347–367 (ITIFITLFLLSVCYSATITFF) threads the bilayer. The Cytoplasmic portion of the chain corresponds to 368 to 395 (KVKWIFSSVVDLKQTIVPDYRNMIRQGA).

In terms of assembly, immunoglobulins are composed of two identical heavy chains and two identical light chains; disulfide-linked. In terms of processing, glycosylation on Asn-176 is required for interaction with Fc receptors and ability to activate the complement pathway. (Microbial infection) Deglycosylation on Asn-176 by S.pyogenes EndoS or Endos2 endoglucosidases prevents interaction between immunoglobulin-gamma (IgG) and Fc receptors, impairing ability to activate the complement pathway.

It localises to the secreted. The protein localises to the cell membrane. Functionally, constant region of immunoglobulin heavy chains. Immunoglobulins, also known as antibodies, are membrane-bound or secreted glycoproteins produced by B lymphocytes. In the recognition phase of humoral immunity, the membrane-bound immunoglobulins serve as receptors which, upon binding of a specific antigen, trigger the clonal expansion and differentiation of B lymphocytes into immunoglobulins-secreting plasma cells. Secreted immunoglobulins mediate the effector phase of humoral immunity, which results in the elimination of bound antigens. The antigen binding site is formed by the variable domain of one heavy chain, together with that of its associated light chain. Thus, each immunoglobulin has two antigen binding sites with remarkable affinity for a particular antigen. The variable domains are assembled by a process called V-(D)-J rearrangement and can then be subjected to somatic hypermutations which, after exposure to antigen and selection, allow affinity maturation for a particular antigen. The polypeptide is Immunoglobulin heavy constant gamma 2 (Homo sapiens (Human)).